The primary structure comprises 609 residues: UvrABC system protein C (609 aa).

In terms of domain architecture, GIY-YIG spans 16 to 94; that stretch reads SSPGVYRMYD…IKQYMPRYNV (79 aa). The UVR domain maps to 203–238; that stretch reads LQVMTELVSKMEASALALEYEQAASYRDQIAALRRV.

Belongs to the UvrC family. In terms of assembly, interacts with UvrB in an incision complex.

It is found in the cytoplasm. Functionally, the UvrABC repair system catalyzes the recognition and processing of DNA lesions. UvrC both incises the 5' and 3' sides of the lesion. The N-terminal half is responsible for the 3' incision and the C-terminal half is responsible for the 5' incision. The sequence is that of UvrABC system protein C from Shewanella sediminis (strain HAW-EB3).